Consider the following 170-residue polypeptide: Gas vesicle protein A2 (170 aa).

A disordered region spans residues 86–170 (SPMAKTVGRA…PRRRTEEEDR (85 aa)). Composition is skewed to basic and acidic residues over residues 104–119 (LTDK…HEHE) and 127–137 (DRPRAGAERGR). Positions 138–148 (STQRPRSRPAA) are enriched in basic residues. Positions 149-170 (RPRDEDDRPRSRPRRRTEEEDR) are enriched in basic and acidic residues.

The protein belongs to the gas vesicle GvpA family. In terms of assembly, the gas vesicle shell is 2 nm thick and consists of a single layer of this protein. It forms helical ribs nearly perpendicular to the long axis of the vesicle.

It localises to the gas vesicle shell. Gas vesicles are hollow, gas filled proteinaceous nanostructures found in some microorganisms. During planktonic growth they allow positioning of the organism at a favorable depth for light or nutrient acquisition. GvpA forms the protein shell. It is not clear what function GVs perform in soil bacteria. This is Gas vesicle protein A2 from Streptomyces coelicolor (strain ATCC BAA-471 / A3(2) / M145).